The primary structure comprises 112 residues: Mitochondrial import inner membrane translocase subunit TIM14-2 (112 aa).

Residues 7 to 25 (AGAAVAAAAYAGKYGIEAW) traverse the membrane as a helical segment. Positions 53–112 (EAALILGVRESVAAEKVKEAHRRVMVANHPDAGGSHYLASKINEAKDMMLGKTKNSGSAF) constitute a J domain.

This sequence belongs to the TIM14 family. Probable component of the PAM complex at least composed of a mitochondrial HSP70 protein, TIMM44 and TIMM14. The complex interacts with the TIMM23 component of the TIM17:23 complex.

It is found in the mitochondrion. The protein resides in the mitochondrion inner membrane. In terms of biological role, component of the PAM complex, a complex required for the translocation of transit peptide-containing proteins from the inner membrane into the mitochondrial matrix in an ATP-dependent manner. The sequence is that of Mitochondrial import inner membrane translocase subunit TIM14-2 (TIM14-2) from Arabidopsis thaliana (Mouse-ear cress).